The primary structure comprises 104 residues: Protein METHYLENE BLUE SENSITIVITY 2 (104 aa).

Basic residues predominate over residues 1–11; sequence MTGKAKPKKHT. Disordered regions lie at residues 1-46 and 64-104; these read MTGK…GHAK and IHHE…SLKK. 2 stretches are compositionally biased toward basic and acidic residues: residues 36-46 and 73-82; these read RTGKEKGGHAK and LTYEEPRNLH.

It localises to the nucleus. It is found in the cytoplasm. The protein resides in the stress granule. In terms of biological role, required for acclimation to reactive oxygen species (ROS) responses downstream of beta-cyclocitral, including singlet oxygen 1O(2) detoxification reactions, especially upon light-mediated photooxidative stress, and leading to programmed cell death. Prevents leaf senescence. In Arabidopsis thaliana (Mouse-ear cress), this protein is Protein METHYLENE BLUE SENSITIVITY 2.